A 31-amino-acid chain; its full sequence is Cyclotide vinc-B (31 aa).

A cross-link (cyclopeptide (Gly-Asn)) is located at residues 1 to 31; that stretch reads GSIPACGESCFKGKCYTPGCTCSKYPLCAKN. 3 cysteine pairs are disulfide-bonded: Cys6-Cys20, Cys10-Cys22, and Cys15-Cys28.

This sequence belongs to the cyclotide family. Post-translationally, this is a cyclic peptide.

Probably participates in a plant defense mechanism. The chain is Cyclotide vinc-B from Viola inconspicua.